The following is a 247-amino-acid chain: Carboxy-S-adenosyl-L-methionine synthase (247 aa).

Residues Tyr40, Gly65 to Ser67, Asp90 to Asn91, Asp122 to Ile123, Asn137, and Arg204 each bind S-adenosyl-L-methionine.

This sequence belongs to the class I-like SAM-binding methyltransferase superfamily. Cx-SAM synthase family. In terms of assembly, homodimer.

The catalysed reaction is prephenate + S-adenosyl-L-methionine = carboxy-S-adenosyl-L-methionine + 3-phenylpyruvate + H2O. In terms of biological role, catalyzes the conversion of S-adenosyl-L-methionine (SAM) to carboxy-S-adenosyl-L-methionine (Cx-SAM). This Pseudomonas putida (strain ATCC 47054 / DSM 6125 / CFBP 8728 / NCIMB 11950 / KT2440) protein is Carboxy-S-adenosyl-L-methionine synthase.